The sequence spans 284 residues: Bifunctional protein FolD (284 aa).

Residues 164–166 (GRS) and Ser189 contribute to the NADP(+) site.

Belongs to the tetrahydrofolate dehydrogenase/cyclohydrolase family. In terms of assembly, homodimer.

The catalysed reaction is (6R)-5,10-methylene-5,6,7,8-tetrahydrofolate + NADP(+) = (6R)-5,10-methenyltetrahydrofolate + NADPH. The enzyme catalyses (6R)-5,10-methenyltetrahydrofolate + H2O = (6R)-10-formyltetrahydrofolate + H(+). It participates in one-carbon metabolism; tetrahydrofolate interconversion. Its function is as follows. Catalyzes the oxidation of 5,10-methylenetetrahydrofolate to 5,10-methenyltetrahydrofolate and then the hydrolysis of 5,10-methenyltetrahydrofolate to 10-formyltetrahydrofolate. This is Bifunctional protein FolD from Listeria monocytogenes serovar 1/2a (strain ATCC BAA-679 / EGD-e).